The sequence spans 475 residues: Argininosuccinate lyase 1 (475 aa).

It belongs to the lyase 1 family. Argininosuccinate lyase subfamily.

The protein localises to the cytoplasm. The enzyme catalyses 2-(N(omega)-L-arginino)succinate = fumarate + L-arginine. Its pathway is amino-acid biosynthesis; L-arginine biosynthesis; L-arginine from L-ornithine and carbamoyl phosphate: step 3/3. This Pseudomonas fluorescens (strain Pf0-1) protein is Argininosuccinate lyase 1.